Here is a 1082-residue protein sequence, read N- to C-terminus: CRISPR-associated endonuclease Cas9 (1082 aa).

D16 serves as the catalytic For RuvC-like nuclease domain. Positions 16, 504, and 508 each coordinate Mg(2+). The 156-residue stretch at 512–667 folds into the HNH Cas9-type domain; the sequence is SFKDRKEIEK…DEDGFKERNL (156 aa). H588 functions as the Proton acceptor for HNH nuclease domain in the catalytic mechanism. H723 contacts Mg(2+).

Belongs to the CRISPR-associated protein Cas9 family. Subtype II-C subfamily. In terms of assembly, monomer. Binds crRNA and tracrRNA. It depends on Mg(2+) as a cofactor.

In terms of biological role, CRISPR (clustered regularly interspaced short palindromic repeat) is an adaptive immune system that provides protection against mobile genetic elements (viruses, transposable elements and conjugative plasmids). CRISPR clusters contain spacers, sequences complementary to antecedent mobile elements, and target invading nucleic acids. CRISPR clusters are transcribed and processed into CRISPR RNA (crRNA). In type II CRISPR systems correct processing of pre-crRNA requires a trans-encoded small RNA (tracrRNA), endogenous ribonuclease 3 (rnc) and this protein. The tracrRNA serves as a guide for ribonuclease 3-aided processing of pre-crRNA. Subsequently Cas9/crRNA/tracrRNA endonucleolytically cleaves linear or circular dsDNA target complementary to the spacer; Cas9 is inactive in the absence of the 2 guide RNAs (gRNA). Cas9 recognizes the protospacer adjacent motif (PAM) in the CRISPR repeat sequences to help distinguish self versus nonself, as targets within the bacterial CRISPR locus do not have PAMs. PAM recognition is also required for catalytic activity. Cuts target DNA in Cas9:gRNAs mixing experiments with C.jejuni strain NCTC 11168 and P.multocoda strain Pm70. This Neisseria meningitidis serogroup A / serotype 4A (strain DSM 15465 / Z2491) protein is CRISPR-associated endonuclease Cas9.